Reading from the N-terminus, the 201-residue chain is MEKLTPRQQMVLAFISAHLESHGYPPTLREIGGHLGINGTLGVMKHLDALERKGFITRNAGSSRGIVLVGAVAATSIPIVGVVRAGALQPAIEDIEGYFAVDRALVKGADCFFLRVKGDSMIEAGIRSGDLALVRPQATADNGDIVVARINDEATLKRFFREKDRIRLQPENSAMEPIIVKAKAGEVNIIGKVTGIFRSLE.

Residues 28 to 48 (LREIGGHLGINGTLGVMKHLD) constitute a DNA-binding region (H-T-H motif). Active-site for autocatalytic cleavage activity residues include Ser120 and Lys157.

It belongs to the peptidase S24 family. In terms of assembly, homodimer.

It catalyses the reaction Hydrolysis of Ala-|-Gly bond in repressor LexA.. Its function is as follows. Represses a number of genes involved in the response to DNA damage (SOS response), including recA and lexA. In the presence of single-stranded DNA, RecA interacts with LexA causing an autocatalytic cleavage which disrupts the DNA-binding part of LexA, leading to derepression of the SOS regulon and eventually DNA repair. This is LexA repressor from Geotalea uraniireducens (strain Rf4) (Geobacter uraniireducens).